A 638-amino-acid chain; its full sequence is Signal recognition particle receptor subunit alpha (638 aa).

Disordered stretches follow at residues 132–244 (APTT…GKKA) and 283–316 (GTGSGGQLQDLDCSSSDDEGAAQNSTKPSATKGT). Composition is skewed to basic and acidic residues over residues 137–146 (KKFEDSEKAK) and 153–165 (IETRGEKPKEKAK). Ser-177 carries the post-translational modification Phosphoserine. Positions 204 to 239 (LSKEELIRRKREEFIQKHGRGMEKSNKSTKSDAPKE) are enriched in basic and acidic residues. Thr-284 is subject to Phosphothreonine. A phosphoserine mark is found at Ser-296, Ser-297, and Ser-298. Positions 304 to 314 (AQNSTKPSATK) are enriched in polar residues. Residues 419 to 636 (YVVTFCGVNG…NAKAVVAALM (218 aa)) are NG domain. Residue 425-432 (GVNGVGKS) participates in GTP binding. Ser-473 is modified (phosphoserine). 520-524 (DTAGR) lines the GTP pocket. At Thr-578 the chain carries Phosphothreonine. 588–591 (TKFD) lines the GTP pocket.

It belongs to the GTP-binding SRP family. Heterodimer with SRPRB. Interacts with the signal recognition particle (SRP) complex subunit SRP54. In terms of assembly, (Microbial infection) May interact with Zika virus strain Mr-766 non-structural protein 4A/NS4A. May interact with Zika virus French Polynesia 10087PF/2013 non-structural protein 4A/NS4A. As to quaternary structure, (Microbial infection) May interact with Dengue virus DENV2 16681 non-structural protein 4A/NS4A.

The protein resides in the endoplasmic reticulum membrane. Its function is as follows. Component of the signal recognition particle (SRP) complex receptor (SR). Ensures, in conjunction with the SRP complex, the correct targeting of the nascent secretory proteins to the endoplasmic reticulum membrane system. Forms a guanosine 5'-triphosphate (GTP)-dependent complex with the SRP subunit SRP54. SRP receptor compaction and GTPase rearrangement drive SRP-mediated cotranslational protein translocation into the ER. The sequence is that of Signal recognition particle receptor subunit alpha from Homo sapiens (Human).